A 560-amino-acid chain; its full sequence is Putative transport protein VV1438 (560 aa).

5 helical membrane-spanning segments follow: residues 5 to 25, 37 to 57, 66 to 86, 91 to 111, and 164 to 184; these read VVLLLQQNPILLIFVVLAIGL, LGNSIGVLITSLIMGHLGFSF, FMLFIYCVGIEAGPNFFGIFF, HYFTLSMVVLVTAVSISYFAS, and VGYAMAYLVGLISMIMFAKLL. RCK C-terminal domains lie at 203–292 and 293–376; these read RGLG…FRNG and KEVF…RIGF. The next 6 membrane-spanning stretches (helical) occupy residues 386-406, 409-429, 443-463, 478-498, 506-526, and 539-559; these read LLAFCSFFILGIMFGLVTMTF, VSFSLGNAVGLLLSGITLGFL, ALNMVKDLGLMIFMVGIGLSA, IIGIAFLVSVVPVFFAYLVGA, ALLFGAIIGARTCAPAMDIVN, and AGTYAIANILMTLAGTILIIL.

The protein belongs to the AAE transporter (TC 2.A.81) family. YbjL subfamily.

It localises to the cell membrane. This chain is Putative transport protein VV1438, found in Vibrio vulnificus (strain YJ016).